Here is a 200-residue protein sequence, read N- to C-terminus: NADH-quinone oxidoreductase subunit C 1 (200 aa).

It belongs to the complex I 30 kDa subunit family. In terms of assembly, NDH-1 is composed of 14 different subunits. Subunits NuoB, C, D, E, F, and G constitute the peripheral sector of the complex.

Its subcellular location is the cell inner membrane. It catalyses the reaction a quinone + NADH + 5 H(+)(in) = a quinol + NAD(+) + 4 H(+)(out). Functionally, NDH-1 shuttles electrons from NADH, via FMN and iron-sulfur (Fe-S) centers, to quinones in the respiratory chain. The immediate electron acceptor for the enzyme in this species is believed to be ubiquinone. Couples the redox reaction to proton translocation (for every two electrons transferred, four hydrogen ions are translocated across the cytoplasmic membrane), and thus conserves the redox energy in a proton gradient. The chain is NADH-quinone oxidoreductase subunit C 1 from Rhizobium etli (strain CIAT 652).